Here is a 185-residue protein sequence, read N- to C-terminus: Acireductone dioxygenase (185 aa).

A disordered region spans residues 1 to 22 (MSRLSIHPEGSTNATSPAEPLL). Residues H102, H104, E108, and H146 each contribute to the Fe(2+) site. Residues H102, H104, E108, and H146 each coordinate Ni(2+).

Belongs to the acireductone dioxygenase (ARD) family. Monomer. The cofactor is Fe(2+). Ni(2+) serves as cofactor.

The enzyme catalyses 1,2-dihydroxy-5-(methylsulfanyl)pent-1-en-3-one + O2 = 3-(methylsulfanyl)propanoate + CO + formate + 2 H(+). It catalyses the reaction 1,2-dihydroxy-5-(methylsulfanyl)pent-1-en-3-one + O2 = 4-methylsulfanyl-2-oxobutanoate + formate + 2 H(+). The protein operates within amino-acid biosynthesis; L-methionine biosynthesis via salvage pathway; L-methionine from S-methyl-5-thio-alpha-D-ribose 1-phosphate: step 5/6. Functionally, catalyzes 2 different reactions between oxygen and the acireductone 1,2-dihydroxy-3-keto-5-methylthiopentene (DHK-MTPene) depending upon the metal bound in the active site. Fe-containing acireductone dioxygenase (Fe-ARD) produces formate and 2-keto-4-methylthiobutyrate (KMTB), the alpha-ketoacid precursor of methionine in the methionine recycle pathway. Ni-containing acireductone dioxygenase (Ni-ARD) produces methylthiopropionate, carbon monoxide and formate, and does not lie on the methionine recycle pathway. The sequence is that of Acireductone dioxygenase from Prochlorococcus marinus (strain MIT 9313).